A 243-amino-acid chain; its full sequence is Max-interacting protein 1 (243 aa).

Positions 76–128 (HYRSTHNELEKNRRAHLRLCLERLKTLIPLGPECSRHTTLGLLNKAKAHIKKL) constitute a bHLH domain. The interval 164-235 (EAERIRTDSM…TASDEGYSSC (72 aa)) is disordered. Over residues 188–198 (DQEEMEVDVES) the composition is skewed to acidic residues. Residues 222–235 (SLQSTASDEGYSSC) show a composition bias toward polar residues.

Efficient DNA binding requires dimerization with another bHLH protein. Binds DNA as a heterodimer with MAX.

It is found in the nucleus. Its function is as follows. Transcriptional repressor. MXI1 binds with MAX to form a sequence-specific DNA-binding protein complex which recognizes the core sequence 5'-CAC[GA]TG-3'. MXI1 thus antagonizes MYC transcriptional activity by competing for MAX. The chain is Max-interacting protein 1 (mxi1) from Danio rerio (Zebrafish).